The chain runs to 429 residues: Saccharopine dehydrogenase-like oxidoreductase (429 aa).

At Ala2 the chain carries N-acetylalanine. Ser217 bears the Phosphoserine mark.

The protein belongs to the saccharopine dehydrogenase family.

The protein is Saccharopine dehydrogenase-like oxidoreductase (SCCPDH) of Pongo abelii (Sumatran orangutan).